The sequence spans 336 residues: Retinol dehydrogenase 14 (336 aa).

Position 5 is a phosphothreonine (threonine 5). 50–56 lines the NADP(+) pocket; the sequence is GANSGLG. Serine 192 serves as a coordination point for substrate. The active-site Proton acceptor is tyrosine 217.

It belongs to the short-chain dehydrogenases/reductases (SDR) family. In terms of tissue distribution, widely expressed.

It catalyses the reaction all-trans-retinol + NADP(+) = all-trans-retinal + NADPH + H(+). The catalysed reaction is 9-cis-retinol + NADP(+) = 9-cis-retinal + NADPH + H(+). The enzyme catalyses 11-cis-retinol + NADP(+) = 11-cis-retinal + NADPH + H(+). Its pathway is cofactor metabolism; retinol metabolism. Functionally, retinol dehydrogenase with a clear preference for NADP. Displays high activity towards 9-cis, 11-cis and all-trans-retinol. Shows a very weak activity towards 13-cis-retinol. Has no activity towards steroid. This chain is Retinol dehydrogenase 14 (RDH14), found in Homo sapiens (Human).